A 638-amino-acid polypeptide reads, in one-letter code: Zinc finger protein 143 (638 aa).

Met-1 bears the N-acetylmethionine mark. Residue Lys-213 forms a Glycyl lysine isopeptide (Lys-Gly) (interchain with G-Cter in SUMO2) linkage. 4 consecutive C2H2-type zinc fingers follow at residues 237 to 261 (FRCKYDGCGKLYTTAHHLKVHERSH), 267 to 291 (YQCEHSGCGKAFATGYGLKSHFRTH), 297 to 321 (YRCSEDNCTKSFKTSGDLQKHIRTH), and 327 to 351 (FKCPIEGCGRSFTTSNIRKVHIRTH). Thr-352 bears the Phosphothreonine mark. 3 consecutive C2H2-type zinc fingers follow at residues 357-381 (YYCTEPGCGRAFASATNYKNHVRIH), 387-411 (YVCTVPGCDKRFTEYSSLYKHHVVH), and 417-440 (YNCNHCGKTYKQISTLAMHKRTAH). Lys-406 participates in a covalent cross-link: Glycyl lysine isopeptide (Lys-Gly) (interchain with G-Cter in SUMO2).

Belongs to the GLI C2H2-type zinc-finger protein family. In terms of assembly, interacts with CHD8. Forms a complex with HCFC1 and ZNF143.

It localises to the nucleus. Its function is as follows. Transcriptional activator. In complex with HCFC1 and ZNF143, regulates the expression of several genes, including AP2S1, ESCO2, OPHN1, RBL1, UBXN8 and ZNF32. Activates the gene for selenocysteine tRNA (tRNAsec). Binds to the SPH motif of small nuclear RNA (snRNA) gene promoters. Participates in efficient U6 RNA polymerase III transcription via its interaction with CHD8. The protein is Zinc finger protein 143 (Znf143) of Rattus norvegicus (Rat).